The following is a 253-amino-acid chain: U2 small nuclear ribonucleoprotein A' (253 aa).

LRR repeat units lie at residues 19-40 (KDRELDLRGHKIPTIENLGIAK), 41-62 (DQDAIDFTDNDISSLGNFPFFP), 63-84 (RLHTLLLARNRVKHIQPTIAST), and 87-108 (NLTTLVLTANNMAELADLDPLR). The LRRCT domain maps to 121 to 159 (NPVTRKEHYRYWVIWRIPSVRFLDYQKVKDAERAKAKEL). The segment at 228–253 (ELNEGRIPGGALDAGEDSEDENQMQT) is disordered. Residues 241 to 253 (AGEDSEDENQMQT) are compositionally biased toward acidic residues.

The protein belongs to the U2 small nuclear ribonucleoprotein A family. Associated with the spliceosome.

The protein localises to the nucleus. Functionally, involved in pre-mRNA splicing. The polypeptide is U2 small nuclear ribonucleoprotein A' (lea1) (Aspergillus fumigatus (strain ATCC MYA-4609 / CBS 101355 / FGSC A1100 / Af293) (Neosartorya fumigata)).